The following is a 349-amino-acid chain: MPIIDFEIWKLWLFRSIKAIVIIFLVGFSIVLPVDSIVQAAESSNTALNTFIVVGALVAFGLVSIIIIVGRIIFCRSCIQDIPRRYLPITPNDLPHRGSRKMIMENMEKSKELSILFKKPKEPVIHAGLEPPSRCDDPRYEKLFPDYLNYRSCIKSLSDRLKYQGIFLNNMNIDMKLGETFADVVSNQFTRNTRNKTQIDNSKKFIDLYETIRYSGREVTRQQFIDFVSLAIYFVEVSLTRDDRSPALGELNTGSQLQFNFDNGTWENDVSNYSFPNDAYSNGADYYYPESINYLKRTNSTSTVARKVPSFVPTNPEEEHKMALDPQDPVSHKPSMHTLADSFKYVTHR.

Residues 1-18 (MPIIDFEIWKLWLFRSIK) lie on the Cytoplasmic side of the membrane. A helical membrane pass occupies residues 19–39 (AIVIIFLVGFSIVLPVDSIVQ). Residues 40 to 49 (AAESSNTALN) lie on the Extracellular side of the membrane. The chain crosses the membrane as a helical span at residues 50-70 (TFIVVGALVAFGLVSIIIIVG). The Cytoplasmic segment spans residues 71-349 (RIIFCRSCIQ…ADSFKYVTHR (279 aa)). Residues 312–333 (VPTNPEEEHKMALDPQDPVSHK) are disordered.

The protein belongs to the DLT1 family.

It is found in the membrane. In terms of biological role, required for growth under high-pressure and low-temperature conditions. This Zygosaccharomyces rouxii (strain ATCC 2623 / CBS 732 / NBRC 1130 / NCYC 568 / NRRL Y-229) protein is Defect at low temperature protein 1 (DLT1).